We begin with the raw amino-acid sequence, 239 residues long: Ribose-5-phosphate isomerase A (239 aa).

Substrate contacts are provided by residues 40 to 43 (SGST), 96 to 99 (DGAD), and 110 to 113 (KGGG). Residue E119 is the Proton acceptor of the active site. A substrate-binding site is contributed by K137.

Belongs to the ribose 5-phosphate isomerase family. Homodimer.

The catalysed reaction is aldehydo-D-ribose 5-phosphate = D-ribulose 5-phosphate. It participates in carbohydrate degradation; pentose phosphate pathway; D-ribose 5-phosphate from D-ribulose 5-phosphate (non-oxidative stage): step 1/1. Catalyzes the reversible conversion of ribose-5-phosphate to ribulose 5-phosphate. The protein is Ribose-5-phosphate isomerase A of Methanococcus vannielii (strain ATCC 35089 / DSM 1224 / JCM 13029 / OCM 148 / SB).